The primary structure comprises 111 residues: Succinate dehydrogenase assembly factor 1B, mitochondrial (111 aa).

This sequence belongs to the complex I LYR family. SDHAF1 subfamily. Interacts with the iron-sulfur protein subunit within the SDH catalytic dimer.

The protein localises to the mitochondrion matrix. Plays an essential role in the assembly of succinate dehydrogenase (SDH), an enzyme complex (also referred to as respiratory complex II) that is a component of both the tricarboxylic acid (TCA) cycle and the mitochondrial electron transport chain, and which couples the oxidation of succinate to fumarate with the reduction of ubiquinone (coenzyme Q) to ubiquinol. Promotes maturation of the iron-sulfur protein subunit of the SDH catalytic dimer, protecting it from the deleterious effects of oxidants. May act together with SDHAF3. This is Succinate dehydrogenase assembly factor 1B, mitochondrial from Dictyostelium discoideum (Social amoeba).